A 361-amino-acid polypeptide reads, in one-letter code: GTPase Obg (361 aa).

The Obg domain maps to 1–159 (MKFVDEAFID…KNLKLELKVL (159 aa)). The OBG-type G domain maps to 160–334 (ADVGLLGMPN…LIKTIYQHVK (175 aa)). GTP-binding positions include 166-173 (GMPNAGKS), 191-195 (FTTLH), 213-216 (DLPG), 284-287 (NKLD), and 315-317 (SAL). 2 residues coordinate Mg(2+): S173 and T193. The interval 339 to 361 (SEQPVEEVDPRFVPLPPESPETP) is disordered. Residues 351-361 (VPLPPESPETP) show a composition bias toward pro residues.

It belongs to the TRAFAC class OBG-HflX-like GTPase superfamily. OBG GTPase family. As to quaternary structure, monomer. Mg(2+) serves as cofactor.

The protein localises to the cytoplasm. In terms of biological role, an essential GTPase which binds GTP, GDP and possibly (p)ppGpp with moderate affinity, with high nucleotide exchange rates and a fairly low GTP hydrolysis rate. Plays a role in control of the cell cycle, stress response, ribosome biogenesis and in those bacteria that undergo differentiation, in morphogenesis control. This chain is GTPase Obg, found in Polaromonas sp. (strain JS666 / ATCC BAA-500).